The chain runs to 403 residues: Enoyl-[acyl-carrier-protein] reductase [NADH] (403 aa).

Residues 49-54 (GASSGY), 75-76 (FE), 112-113 (DA), and 141-142 (LA) contribute to the NAD(+) site. Tyr227 contacts substrate. Catalysis depends on Tyr237, which acts as the Proton donor. Residues Lys246 and 276-278 (VVT) each bind NAD(+).

It belongs to the TER reductase family. In terms of assembly, monomer.

It carries out the reaction a 2,3-saturated acyl-[ACP] + NAD(+) = a (2E)-enoyl-[ACP] + NADH + H(+). It participates in lipid metabolism; fatty acid biosynthesis. In terms of biological role, involved in the final reduction of the elongation cycle of fatty acid synthesis (FAS II). Catalyzes the reduction of a carbon-carbon double bond in an enoyl moiety that is covalently linked to an acyl carrier protein (ACP). The protein is Enoyl-[acyl-carrier-protein] reductase [NADH] of Pseudomonas putida (strain GB-1).